A 339-amino-acid chain; its full sequence is Dihydroorotate dehydrogenase (quinone) (339 aa).

Residues 64 to 68 (AGADK) and T88 contribute to the FMN site. K68 serves as a coordination point for substrate. Position 113 to 117 (113 to 117 (NRNGF)) interacts with substrate. FMN contacts are provided by N141 and N174. N174 contacts substrate. S177 serves as the catalytic Nucleophile. N179 contacts substrate. FMN-binding residues include K219 and T247. Residue 248–249 (NT) participates in substrate binding. Residues G270, G299, and 320–321 (YS) contribute to the FMN site.

Belongs to the dihydroorotate dehydrogenase family. Type 2 subfamily. As to quaternary structure, monomer. It depends on FMN as a cofactor.

It is found in the cell membrane. The enzyme catalyses (S)-dihydroorotate + a quinone = orotate + a quinol. It functions in the pathway pyrimidine metabolism; UMP biosynthesis via de novo pathway; orotate from (S)-dihydroorotate (quinone route): step 1/1. Catalyzes the conversion of dihydroorotate to orotate with quinone as electron acceptor. In Haemophilus influenzae (strain ATCC 51907 / DSM 11121 / KW20 / Rd), this protein is Dihydroorotate dehydrogenase (quinone) (pyrD).